We begin with the raw amino-acid sequence, 587 residues long: Transport inhibitor response 1-like protein Os05g0150500 (587 aa).

Residues 6–63 enclose the F-box domain; it reads SRAACAAAAPPWHSLPDEVWEHAFSFLPAAADRGAAAGACSSWLRAERRSRRRLAVAN. Lys-85 serves as a coordination point for 1D-myo-inositol hexakisphosphate. Residues 92–93 are interaction with auxin-responsive proteins; that stretch reads DF. 1D-myo-inositol hexakisphosphate is bound by residues 124 to 125 and Arg-355; that span reads KR. The interval 358 to 363 is interaction with auxin-responsive proteins; that stretch reads PSDPFG. 409–411 serves as a coordination point for 1D-myo-inositol hexakisphosphate; the sequence is CFR. The segment at 413-417 is interaction with auxin-responsive proteins; it reads CILEP. Arg-444 contacts 1D-myo-inositol hexakisphosphate. The segment at 472 to 473 is interaction with auxin-responsive proteins; the sequence is AF. Residues 492 to 493 and Arg-517 each bind 1D-myo-inositol hexakisphosphate; that span reads KK.

As to quaternary structure, part of a SCF (SKP1-cullin-F-box) protein ligase complex. May interact with auxin and auxin-responsive proteins.

The protein localises to the nucleus. It participates in protein modification; protein ubiquitination. The sequence is that of Transport inhibitor response 1-like protein Os05g0150500 from Oryza sativa subsp. japonica (Rice).